We begin with the raw amino-acid sequence, 608 residues long: Nuclear receptor subfamily 2 group C member 1 (608 aa).

Residues 1 to 179 (MASIEEIAHQ…RLQRCIAFGM (179 aa)) are required for interaction with KAT2B. The nuclear receptor DNA-binding region spans 111–186 (FDLCVVCGDK…FGMKQDSVQC (76 aa)). 2 consecutive NR C4-type zinc fingers follow at residues 114–134 (CVVC…CEGC) and 150–169 (CRGS…CQYC). Residues Ser-198 and Ser-216 each carry the phosphoserine modification. Thr-221 carries the phosphothreonine modification. At Thr-223 the chain carries Phosphothreonine; by MAPK1. A Glycyl lysine isopeptide (Lys-Gly) (interchain with G-Cter in SUMO); alternate cross-link involves residue Lys-251. A Glycyl lysine isopeptide (Lys-Gly) (interchain with G-Cter in SUMO2); alternate cross-link involves residue Lys-251. The 243-residue stretch at 353 to 595 (GNVHLIAGDS…SVIPHILKME (243 aa)) folds into the NR LBD domain. Ser-586 is modified (phosphoserine; by PKC). Residues 589–608 (PHILKMEPADYNSQIIGHSI) are required for interaction with NRIP1. Lys-593 participates in a covalent cross-link: Glycyl lysine isopeptide (Lys-Gly) (interchain with G-Cter in SUMO2).

It belongs to the nuclear hormone receptor family. NR2 subfamily. In terms of assembly, homodimer. Heterodimer; with NR2C2 which is required for chromatin remodeling and for binding to promoter regions such as globin DR1 repeats. Interacts with ESR1; the interaction prevents homodimerization of ESR1 and suppresses its transcriptional activity and cell growth. Interacts with NRIP1 (via its LXXLL motifs); the interaction provides corepressor activity. Interacts with HDAC3 (via the DNA-binding domain); the interaction recruits phosphorylated NR2C1 to PML bodies for sumoylation. Interacts with HDAC4 (via the DNA-binding domain). Interacts with PIAS1; the interaction is required for sumoylation of NR2C1. Interacts with UBE2I; the interaction is required for sumoylation of NR2C1. Interacts with KAT2B; the interaction acts as a corepressor of gene expression. Post-translationally, sumoylation requires both PIAS1 and UBE2I. Sumoylation appears to dissociate NR2C1 from the PML nuclear bodies. Enhances the interaction with NRIP1 but inhibits interaction with KAT2B. In proliferating cells, stimulation by all-trans retinoic acid, activation of MAPK1-mediated phosphorylation and recruitment to PML bodies with subsequent sumoylation, suppresses OCT4 expression. In terms of processing, phosphorylated on several serine and threonine residues. Phosphorylation on Thr-223, stimulated by all-trans retinoic acid (atRA) mediates PML location and sumoylation in proliferating cells which then modulates its association with effector molecules, KAT2B and NRIP1. Phosphorylation on Ser-586 by PKC is important for protein stability and function as activator of RARB.

Its subcellular location is the nucleus. It localises to the PML body. Its function is as follows. Orphan nuclear receptor. Binds the IR7 element in the promoter of its own gene in an autoregulatory negative feedback mechanism. Primarily repressor of a broad range of genes including ESR1 and RARB. Together with NR2C2, forms the core of the DRED (direct repeat erythroid-definitive) complex that represses embryonic and fetal globin transcription. Binds to hormone response elements (HREs) consisting of two 5'-AGGTCA-3' half site direct repeat consensus sequences. Also activator of OCT4 gene expression. Plays a fundamental role in early embryogenesis and regulates embryonic stem cell proliferation and differentiation. Mediator of retinoic acid-regulated preadipocyte proliferation. This Bos taurus (Bovine) protein is Nuclear receptor subfamily 2 group C member 1 (NR2C1).